Consider the following 65-residue polypeptide: Conotoxin mr5.1b (65 aa).

The N-terminal stretch at 1–19 (MRCVPVFVILLLLIASAPS) is a signal peptide. Positions 20-48 (VDARLKTKDDMPLPSSHANIKRTLQMLRN) are excised as a propeptide. E60 bears the 4-carboxyglutamate mark.

Belongs to the conotoxin T superfamily. In terms of processing, contains 2 disulfide bonds that can be either 'C1-C3, C2-C4' or 'C1-C4, C2-C3', since these disulfide connectivities have been observed for conotoxins with cysteine framework V (for examples, see AC P0DQQ7 and AC P81755). Expressed by the venom duct.

The protein resides in the secreted. The polypeptide is Conotoxin mr5.1b (Conus marmoreus (Marble cone)).